Consider the following 526-residue polypeptide: MFS-type transporter clz19 (526 aa).

The tract at residues 1–49 (MNVDTTSPQAPLAGVESKQDGASNEATAKAESTTHDQNESSSFDERPVH) is disordered. Positions 32-49 (STTHDQNESSSFDERPVH) are enriched in basic and acidic residues. An N-linked (GlcNAc...) asparagine glycan is attached at Asn38. A helical transmembrane segment spans residues 59–79 (ALLAVASFAAAISPASTTTYY). Asn97 carries N-linked (GlcNAc...) asparagine glycosylation. 3 helical membrane passes run 126–143 (VYLV…GLAL), 186–206 (AYLT…GGLL), and 214–234 (AIFW…LTFF). Residues Asn238 and Asn253 are each glycosylated (N-linked (GlcNAc...) asparagine). A run of 6 helical transmembrane segments spans residues 294–314 (FIVC…ISIF), 322–342 (YGYS…GSIL), 384–404 (LTVS…YGWL), 411–431 (VASV…VLIA), 446–466 (ALGA…VAAV), and 473–493 (IGIG…LPAL).

The protein belongs to the major facilitator superfamily.

It is found in the membrane. Functionally, MFS-type transporter; part of the gene cluster that mediates the biosynthesis of squalestatin S1 (SQS1, also known as zaragozic acid A), a heavily oxidized fungal polyketide that offers potent cholesterol lowering activity by targeting squalene synthase (SS). The polypeptide is MFS-type transporter clz19 (Cochliobolus lunatus (Filamentous fungus)).